The chain runs to 742 residues: Synaptic vesicle glycoprotein 2A (742 aa).

The interaction with SYT1 stretch occupies residues 1–57; it reads MEEGFRDRAAFIRGAKDIAKEVKKHAAKKVVKGLDRVQDEYSRRSYSRFEEEEDDDD. The Cytoplasmic portion of the chain corresponds to 1–169; it reads MEEGFRDRAA…GHGRFQWTLY (169 aa). Basic and acidic residues predominate over residues 40 to 49; it reads EYSRRSYSRF. A disordered region spans residues 40–145; the sequence is EYSRRSYSRF…RGEAQRRKDR (106 aa). Phosphoserine occurs at positions 80 and 81. Position 84 is a phosphothreonine (Thr84). Residues 122-137 show a composition bias toward gly residues; that stretch reads VRGGLSDGEGPPGGRG. Ser127 carries the post-translational modification Phosphoserine. A helical membrane pass occupies residues 170 to 190; sequence FVLGLALMADGVEVFVVGFVL. Over 191 to 205 the chain is Extracellular; that stretch reads PSAEKDMCLSDSNKG. A helical transmembrane segment spans residues 206-226; sequence MLGLIVYLGMMVGAFLWGGLA. At 227-233 the chain is on the cytoplasmic side; it reads DRLGRRQ. The chain crosses the membrane as a helical span at residues 234–254; it reads CLLISLSVNSVFAFFSSFVQG. The Extracellular portion of the chain corresponds to 255-262; it reads YGTFLFCR. A helical membrane pass occupies residues 263–283; it reads LLSGVGIGGSIPIVFSYFSEF. The Cytoplasmic portion of the chain corresponds to 284-294; the sequence is LAQEKRGEHLS. A helical transmembrane segment spans residues 295–315; sequence WLCMFWMIGGVYAAAMAWAII. The Extracellular segment spans residues 316 to 334; it reads PHYGWSFQMGSAYQFHSWR. A helical membrane pass occupies residues 335 to 355; the sequence is VFVLVCAFPSVFAIGALTTQP. Residues 356 to 447 lie on the Cytoplasmic side of the membrane; that stretch reads ESPRFFLENG…CFSPEYRRIT (92 aa). Ser393 carries the phosphoserine modification. The chain crosses the membrane as a helical span at residues 448 to 468; sequence LMMMGVWFTMSFSYYGLTVWF. The Extracellular segment spans residues 469-598; sequence PDMIRHLQAV…GTGEGAYMVY (130 aa). Position 480 is a phosphotyrosine (Tyr480). N-linked (GlcNAc...) asparagine glycans are attached at residues Asn498 and Asn548. N-linked (GlcNAc...) asparagine; alternate glycosylation is present at Asn573. Residue Asn573 is glycosylated (N-linked (HexNAc...) asparagine; alternate). Residues 599-619 form a helical membrane-spanning segment; it reads FVSFLGTLAVLPGNIVSALLM. Residues 620–626 lie on the Cytoplasmic side of the membrane; the sequence is DKIGRLR. Residues 627–647 traverse the membrane as a helical segment; that stretch reads MLAGSSVLSCVSCFFLSFGNS. Residues 648–651 lie on the Extracellular side of the membrane; it reads ESAM. Residues 652–672 traverse the membrane as a helical segment; that stretch reads IALLCLFGGVSIASWNALDVL. Topologically, residues 673-685 are cytoplasmic; it reads TVELYPSDKRTTA. The helical transmembrane segment at 686-708 threads the bilayer; the sequence is FGFLNALCKLAAVLGISIFTSFV. Residues 709 to 712 are Extracellular-facing; it reads GITK. Residues 713-731 form a helical membrane-spanning segment; sequence AAPILFASAALALGSSLAL. Topologically, residues 732–742 are cytoplasmic; that stretch reads KLPETRGQVLQ.

It belongs to the major facilitator superfamily. In terms of assembly, interacts with SYT1/synaptotagmin-1 in a calcium-dependent manner. Binds the adapter protein complex AP-2. (Microbial infection) Interacts with C.botulinum neurotoxin type A1 and type A2 (BoNT/A, botA). Interaction is improved by glycosylation of SV2. As to quaternary structure, (Microbial infection) Copurifies with C.botulinum neurotoxin type B (BoNT/B, botB) and synaptotagmin 1 (SYT1). Interaction does not require glycosylation of SV2 or SYT1 proteins. Another group finds only copurification with SYT1 and SYT2. In terms of assembly, (Microbial infection) Interacts with C.botulinum neurotoxin type E (BoNT/E). Interaction requires glycosylation of SV2 proteins. (Microbial infection) Copurifies with C.botulinum neurotoxin type F (BoNT/F) and synaptotagmin 1 (SYT2). Another group finds only copurification with BoNT/F. Interaction requires SV2 glycosylation. Phosphorylation by CK1 of the N-terminal cytoplasmic domain regulates interaction with SYT1. In terms of processing, N-glycosylated, on at least 3 residues. As to expression, widely expressed throughout the brain (at protein level). Expressed by neural and endocrine cells of brain and spinal cord.

The protein resides in the presynapse. It localises to the cytoplasmic vesicle. It is found in the secretory vesicle. Its subcellular location is the synaptic vesicle membrane. Functionally, plays a role in the control of regulated secretion in neural and endocrine cells, enhancing selectively low-frequency neurotransmission. Positively regulates vesicle fusion by maintaining the readily releasable pool of secretory vesicles. In terms of biological role, (Microbial infection) Receptor for C.botulinum neurotoxin type A (BoNT/A, botA); the toxin binds via extracellular loop 4. Restores uptake of BoNT/A in mouse cells that are deleted for SV2 receptor. Glycosylation of Asn-573 is not essential for receptor activity, but enhances uptake. Also serves as a receptor for the closely related C.botulinum neurotoxin type A2; glycosylation is not essential but enhances the interaction. Possible receptor for C.botulinum neurotoxin type D (BoNT/D, botD); BoNT/D does not bind to extracellular loop 4 as do BoNT/A and BoNT/E, nor to loop 1 or loop 3. Another group does not find a convincing interaction with SV2. Its function is as follows. (Microbial infection) Receptor for C.botulinum neurotoxin type E (BoNT/E); the toxin probably binds via extracellular loop 4 and requires glycosylation of Asn-573. Restores uptake of BoNT/E in mouse cells that are deleted for SV2 receptor. Functionally, (Microbial infection) Receptor for C.botulinum neurotoxin type F (BoNT/F). Binding requires glycosylation of Asn-573. The chain is Synaptic vesicle glycoprotein 2A (Sv2a) from Rattus norvegicus (Rat).